Reading from the N-terminus, the 340-residue chain is Ribonucleoside-diphosphate reductase small subunit (340 aa).

Residues D94, E124, and H127 each contribute to the Fe cation site. Y131 is an active-site residue. A helical membrane pass occupies residues 180–200 (FILMILIEGIFFAASFAAIAY). Positions 187, 221, and 224 each coordinate Fe cation.

The protein belongs to the ribonucleoside diphosphate reductase small chain family. As to quaternary structure, heterotetramer composed of a homodimer of the large subunit (R1) and a homodimer of the small subunit (R2). Larger multisubunit protein complex are also active, composed of (R1)n(R2)n. Fe cation serves as cofactor.

The protein localises to the host membrane. It catalyses the reaction a 2'-deoxyribonucleoside 5'-diphosphate + [thioredoxin]-disulfide + H2O = a ribonucleoside 5'-diphosphate + [thioredoxin]-dithiol. Ribonucleoside-diphosphate reductase holoenzyme provides the precursors necessary for viral DNA synthesis. Allows virus growth in non-dividing cells, as well as reactivation from latency in infected hosts. Catalyzes the biosynthesis of deoxyribonucleotides from the corresponding ribonucleotides. The protein is Ribonucleoside-diphosphate reductase small subunit of Human herpesvirus 1 (strain KOS) (HHV-1).